The following is a 20-amino-acid chain: Apidaecin 1+ (20 aa).

Positions 1 to 20 (GKPNRPRPAPIQPRPPHPRL) are disordered.

It belongs to the apidaecin family.

It localises to the secreted. In terms of biological role, antimicrobial peptide active against many Gram-negative enterobacterial and plant-associated bacterial species. Not active against other bacterial species like H.pylori, P.mirabilis, B.pertussis or N.gonorrhoeae. Its function is as follows. Among others, also active against C.jejuni and L.pneumophila but not against Y.enterocolitica. Among others, also active against Y.enterocolitica butnot against L.pneumophila and C.jejuni. This chain is Apidaecin 1+, found in Pimpla disparis (Parasitic wasp).